The sequence spans 119 residues: Large ribosomal subunit protein bL20 (119 aa).

Belongs to the bacterial ribosomal protein bL20 family.

Its function is as follows. Binds directly to 23S ribosomal RNA and is necessary for the in vitro assembly process of the 50S ribosomal subunit. It is not involved in the protein synthesizing functions of that subunit. This chain is Large ribosomal subunit protein bL20, found in Xanthomonas oryzae pv. oryzae (strain PXO99A).